A 317-amino-acid polypeptide reads, in one-letter code: Methionyl-tRNA formyltransferase (317 aa).

109–112 (SLLP) lines the (6S)-5,6,7,8-tetrahydrofolate pocket.

Belongs to the Fmt family.

It carries out the reaction L-methionyl-tRNA(fMet) + (6R)-10-formyltetrahydrofolate = N-formyl-L-methionyl-tRNA(fMet) + (6S)-5,6,7,8-tetrahydrofolate + H(+). Functionally, attaches a formyl group to the free amino group of methionyl-tRNA(fMet). The formyl group appears to play a dual role in the initiator identity of N-formylmethionyl-tRNA by promoting its recognition by IF2 and preventing the misappropriation of this tRNA by the elongation apparatus. The protein is Methionyl-tRNA formyltransferase of Desulforamulus reducens (strain ATCC BAA-1160 / DSM 100696 / MI-1) (Desulfotomaculum reducens).